Reading from the N-terminus, the 173-residue chain is Bacterial deubiquitinase-like protein BilC (173 aa).

Zn(2+) is bound by residues H103, H105, and D115.

This sequence belongs to the M67B family. Zn(2+) is required as a cofactor.

Component of the Bil (bacterial ISG15-like) antiviral defense system, composed of BilA, BilB, BilC and BilD. The Bil system specifically conjugates a ubiquitin-like moiety (bilA) to the bacteriophage central tail fiber (CTF, or tip attachment protein J) via reactions involving E1 (bilD) and E2 (bilB). Modifies CTF of phage SECphi27 and SECphi4, which probably interferes with assembly of the phage tail. Also modifies T5 baseplate hub protein pb3 (gene D16), but not gp27 of phage T6 (Bil defends against T6). BilC is a probable metalloprotease that may cleave non-specifically conjugated targets. Bil-encoding bacteria produce mostly defective phage SECphi27, many of which have phage assembly defects, including no tails. SECphi27 phage progeny produced in E.coli with the Bil system inject less DNA into naive host cells, maybe because the phage are less able to adsorb and inject their DNA into host cells. In terms of biological role, expression of the Bil system in E.coli (strain MG1655) confers about 100-fold resistance to phage SECphi27, SECphi18, SECphi6, SECphi4 and T5, but not to SECphi17. When cells expressing the Bil system are infected by phage SECphi27 at low multiplicity of infection (0.03 MOI) the culture survives, at 3.0 MOI the culture collapses at the same time as cells without the Bil system. Its function is as follows. Cleaves a ubiquitin-GFP (Ubl-GFP) fusion protein in vivo. This chain is Bacterial deubiquitinase-like protein BilC, found in Collimonas sp. (strain OK412).